The following is a 472-amino-acid chain: MVNLVIVSHSSRLGEGVGELARQMLMSDSCKIAIAAGIDDPQNPIGTDAVKVMEAIESVADADHVLVMMDMGSALLSAETALELLAPEIAAKVRLCAAPLVEGTLAATVSAASGADIDKVIFDAMHALEAKREQLGLPSSDTEISDTCPAYDEEARSLAVVIKNRNGLHVRPASRLVYTLSTFNADMLLEKNGKCVTPESINQIALLQVRYNDTLRLIAKGPEAEEALIAFRQLAEDNFGETEEVAPPTLRPVPPVSGKAFYYQPVLCTVQAKSTLTVEEEQDRLRQAIDFTLLDLMTLTAKAEASGLDDIAAIFSGHHTLLDDPELLAAASELLQHEHCTAEYAWQQVLKELSQQYQQLDDEYLQARYIDVDDLLHRTLVHLTQTKEELPQFNSPTILLAENIYPSTVLQLDPAVVKGICLSAGSPVSHSALIARELGIGWICQQGEKLYAIQPEETLTLDVKTQRFNRQG.

Residues 1–135 enclose the PTS EIIA type-4 domain; the sequence is MVNLVIVSHS…HALEAKREQL (135 aa). Residue H9 is the Tele-phosphohistidine intermediate of the active site. The HPr domain occupies 155 to 242; that stretch reads ARSLAVVIKN…QLAEDNFGET (88 aa). The active-site Pros-phosphohistidine intermediate is the H169. The segment at 264–472 is PTS EI-like, N-terminal part; it reads QPVLCTVQAK…VKTQRFNRQG (209 aa). The active-site Tele-phosphohistidine intermediate is the H430.

This sequence belongs to the PEP-utilizing enzyme family. Homodimer. The dihydroxyacetone kinase complex is composed of a homodimer of DhaM, a homodimer of DhaK and the subunit DhaL.

It carries out the reaction dihydroxyacetone + phosphoenolpyruvate = dihydroxyacetone phosphate + pyruvate. It functions in the pathway polyol metabolism; glycerol degradation. Component of the dihydroxyacetone kinase complex, which is responsible for the phosphoenolpyruvate (PEP)-dependent phosphorylation of dihydroxyacetone. DhaM serves as the phosphoryl donor. Is phosphorylated by phosphoenolpyruvate in an EI- and HPr-dependent reaction, and a phosphorelay system on histidine residues finally leads to phosphoryl transfer to DhaL and dihydroxyacetone. This chain is PEP-dependent dihydroxyacetone kinase, phosphoryl donor subunit DhaM, found in Escherichia coli (strain K12).